Reading from the N-terminus, the 435-residue chain is Cytidine monophosphate-N-acetylneuraminic acid hydroxylase (435 aa).

The protein belongs to the CMP-Neu5Ac hydroxylase family. Requires [2Fe-2S] cluster as cofactor.

It localises to the cytoplasm. The catalysed reaction is CMP-N-acetyl-beta-neuraminate + 2 Fe(II)-[cytochrome b5] + O2 + 2 H(+) = CMP-N-glycoloyl-beta-neuraminate + 2 Fe(III)-[cytochrome b5] + H2O. The protein operates within amino-sugar metabolism; N-acetylneuraminate metabolism. Functionally, sialic acids are components of carbohydrate chains of glycoconjugates and are involved in cell-cell recognition and cell-pathogen interactions. Catalyzes the conversion of CMP-N-acetylneuraminic acid (CMP-Neu5Ac) into its hydroxylated derivative CMP-N-glycolylneuraminic acid (CMP-Neu5Gc), a sialic acid abundantly expressed at the surface of many cells. The sequence is that of Cytidine monophosphate-N-acetylneuraminic acid hydroxylase from Sus scrofa (Pig).